The primary structure comprises 505 residues: Tyrosine-protein kinase isoform SRK1 (505 aa).

Composition is skewed to polar residues over residues 1 to 10 (MGSCCSSQDG) and 18 to 31 (AGST…SQSV). The disordered stretch occupies residues 1–53 (MGSCCSSQDGDGNGKATAGSTVDSHELSQSVKGKIKQPEPKPKPPPQVPPAQD). An SH3 domain is found at 54–116 (VKYPIYVGKY…PSNYVAEYKS (63 aa)). An SH2 domain is found at 122 to 214 (WFLGKIKRVE…GLCCKLLYPC (93 aa)). Residues 240 to 493 (IKLLRRLGAG…TLQWQLEEFF (254 aa)) form the Protein kinase domain. Residues 246 to 254 (LGAGQFGEV) and Lys268 each bind ATP. Catalysis depends on Asp359, which acts as the Proton acceptor.

The protein belongs to the protein kinase superfamily. Tyr protein kinase family. SRC subfamily.

It localises to the cytoplasm. It catalyses the reaction L-tyrosyl-[protein] + ATP = O-phospho-L-tyrosyl-[protein] + ADP + H(+). The sequence is that of Tyrosine-protein kinase isoform SRK1 (SRK1) from Spongilla lacustris (Freshwater sponge).